We begin with the raw amino-acid sequence, 244 residues long: Uridylate kinase (244 aa).

Lys-17–Gly-20 contributes to the ATP binding site. Gly-59 contacts UMP. Residues Gly-60 and Arg-64 each contribute to the ATP site. UMP is bound by residues Asp-79 and Thr-140–Thr-147. Residues Thr-167, Tyr-173, and Asp-176 each coordinate ATP.

It belongs to the UMP kinase family. Homohexamer.

The protein localises to the cytoplasm. It carries out the reaction UMP + ATP = UDP + ADP. It participates in pyrimidine metabolism; CTP biosynthesis via de novo pathway; UDP from UMP (UMPK route): step 1/1. Inhibited by UTP. Its function is as follows. Catalyzes the reversible phosphorylation of UMP to UDP. The protein is Uridylate kinase of Hahella chejuensis (strain KCTC 2396).